The following is a 190-amino-acid chain: Ribosome-recycling factor (190 aa).

Belongs to the RRF family.

The protein localises to the cytoplasm. In terms of biological role, responsible for the release of ribosomes from messenger RNA at the termination of protein biosynthesis. May increase the efficiency of translation by recycling ribosomes from one round of translation to another. The sequence is that of Ribosome-recycling factor from Fusobacterium nucleatum subsp. nucleatum (strain ATCC 25586 / DSM 15643 / BCRC 10681 / CIP 101130 / JCM 8532 / KCTC 2640 / LMG 13131 / VPI 4355).